The sequence spans 560 residues: Flagellar M-ring protein (560 aa).

The helical transmembrane segment at 26–46 (IPLIVAGSAAVAIVVAMVLWA) threads the bilayer. The segment at 304–372 (VGAGYPGGVP…TSNYEVDRTI (69 aa)) is disordered. The span at 331 to 353 (PPTNQQNAQNTPQTSTSTNSNSA) shows a compositional bias: low complexity. A compositionally biased stretch (polar residues) spans 354–366 (GPRSTQRNETSNY). Residues 455–475 (FIDQLLAAGRWLLVLVVAWIL) form a helical membrane-spanning segment.

Belongs to the FliF family. In terms of assembly, the basal body constitutes a major portion of the flagellar organelle and consists of four rings (L,P,S, and M) mounted on a central rod. The M ring is integral to the inner membrane of the cell and may be connected to the flagellar rod via the S ring. The S (supramembrane ring) lies just distal to the M ring. The L and P rings lie in the outer membrane and the periplasmic space, respectively.

It is found in the cell inner membrane. It localises to the bacterial flagellum basal body. Functionally, the M ring may be actively involved in energy transduction. The sequence is that of Flagellar M-ring protein (fliF) from Salmonella typhimurium (strain LT2 / SGSC1412 / ATCC 700720).